The following is a 198-amino-acid chain: dCTP deaminase, dUMP-forming (198 aa).

Residues lysine 115–arginine 120, aspartate 133, threonine 141–glutamate 143, glutamine 162, tyrosine 175, and lysine 184 contribute to the dCTP site. Residue glutamate 143 is the Proton donor/acceptor of the active site.

This sequence belongs to the dCTP deaminase family. As to quaternary structure, homotrimer.

The enzyme catalyses dCTP + 2 H2O = dUMP + NH4(+) + diphosphate. Its pathway is pyrimidine metabolism; dUMP biosynthesis; dUMP from dCTP: step 1/1. In terms of biological role, bifunctional enzyme that catalyzes both the deamination of dCTP to dUTP and the hydrolysis of dUTP to dUMP without releasing the toxic dUTP intermediate. This Nanoarchaeum equitans (strain Kin4-M) protein is dCTP deaminase, dUMP-forming.